The primary structure comprises 139 residues: Putative pre-16S rRNA nuclease (139 aa).

It belongs to the YqgF nuclease family.

It is found in the cytoplasm. Functionally, could be a nuclease involved in processing of the 5'-end of pre-16S rRNA. This chain is Putative pre-16S rRNA nuclease, found in Proteus mirabilis (strain HI4320).